A 72-amino-acid chain; its full sequence is Translation initiation factor IF-1 (72 aa).

The S1-like domain occupies 1 to 72; that stretch reads MAKEDTLEFP…TKGRINYRFK (72 aa).

Belongs to the IF-1 family. In terms of assembly, component of the 30S ribosomal translation pre-initiation complex which assembles on the 30S ribosome in the order IF-2 and IF-3, IF-1 and N-formylmethionyl-tRNA(fMet); mRNA recruitment can occur at any time during PIC assembly.

It is found in the cytoplasm. In terms of biological role, one of the essential components for the initiation of protein synthesis. Stabilizes the binding of IF-2 and IF-3 on the 30S subunit to which N-formylmethionyl-tRNA(fMet) subsequently binds. Helps modulate mRNA selection, yielding the 30S pre-initiation complex (PIC). Upon addition of the 50S ribosomal subunit IF-1, IF-2 and IF-3 are released leaving the mature 70S translation initiation complex. This is Translation initiation factor IF-1 from Ruegeria sp. (strain TM1040) (Silicibacter sp.).